Consider the following 498-residue polypeptide: 3-octaprenyl-4-hydroxybenzoate carboxy-lyase (498 aa).

N177 serves as a coordination point for Mn(2+). Prenylated FMN-binding positions include 180-182 (IYR), 194-196 (RWL), and 199-200 (RG). E243 contacts Mn(2+). The active-site Proton donor is the D292.

The protein belongs to the UbiD family. In terms of assembly, homohexamer. Prenylated FMN serves as cofactor. Mn(2+) is required as a cofactor.

Its subcellular location is the cell membrane. It catalyses the reaction a 4-hydroxy-3-(all-trans-polyprenyl)benzoate + H(+) = a 2-(all-trans-polyprenyl)phenol + CO2. It participates in cofactor biosynthesis; ubiquinone biosynthesis. Functionally, catalyzes the decarboxylation of 3-octaprenyl-4-hydroxy benzoate to 2-octaprenylphenol, an intermediate step in ubiquinone biosynthesis. In Methylococcus capsulatus (strain ATCC 33009 / NCIMB 11132 / Bath), this protein is 3-octaprenyl-4-hydroxybenzoate carboxy-lyase.